A 491-amino-acid polypeptide reads, in one-letter code: Glutamate--tRNA ligase (491 aa).

A 'HIGH' region motif is present at residues 13–23 (PSPTGFLHIGN). Positions 110, 112, 137, and 139 each coordinate Zn(2+). The 'KMSKS' region signature appears at 254–258 (KLSKR). Lysine 257 is an ATP binding site.

It belongs to the class-I aminoacyl-tRNA synthetase family. Glutamate--tRNA ligase type 1 subfamily. As to quaternary structure, monomer. The cofactor is Zn(2+).

The protein resides in the cytoplasm. The enzyme catalyses tRNA(Glu) + L-glutamate + ATP = L-glutamyl-tRNA(Glu) + AMP + diphosphate. Functionally, catalyzes the attachment of glutamate to tRNA(Glu) in a two-step reaction: glutamate is first activated by ATP to form Glu-AMP and then transferred to the acceptor end of tRNA(Glu). The sequence is that of Glutamate--tRNA ligase from Listeria innocua serovar 6a (strain ATCC BAA-680 / CLIP 11262).